The primary structure comprises 777 residues: MNTKLTKIISGLFVATAAFQTASAGNITDIKVSSLPNKQKIVKVSFDKEIVNPTGFVTSSPARIALDFEQTGISMDQQVLEYADPLLSKISAAQNSSRARLVLNLNKPGQYNTEVRGNKVWIFINESDDTVSAPARPAVKAAPAAPAKQQAAAPSTKSAVSVSEPFTPAKQQAAAPFTESVVSVSAPFSPAKQQAAASAKQQAAAPAKQQAAAPAKQQAAAPAKQQAAAPAKQTNIDFRKDGKNAGIIELAALGFAGQPDISQQHDHIIVTLKNHTLPTTLQRSLDVADFKTPVQKVTLKRLNNDTQLIITTAGNWELVNKSAAPGYFTFQVLPKKQNLESGGVNNAPKTFTGRKISLDFQDVEIRTILQILAKESGMNIVASDSVNGKMTLSLKDVPWDQALDLVMQARNLDMRQQGNIVNIAPRDELLAKDKALLQAEKDIADLGALYSQNFQLKYKNVEEFRSILRLDNADTTGNRNTLISGRGSVLIDPATNTLIVTDTRSVIEKFRKLIDELDVPAQQVMIEARIVEAADGFSRDLGVKFGATGKKKLKNDTSAFGWGVNSGFGGDDKWGAETKINLPITAAANSISLVRAISSGALNLELSASESLSKTKTLANPRVLTQNRKEAKIESGYEIPFTVTSIANGGSSTNTELKKAVLGLTVTPNITPDGQIIMTVKINKDSPAQCASGNQTILCISTKNLNTQAMVENGGTLIVGGIYEEDNGNTLTKVPLLGDIPVIGNLFKTRGKKTDRRELLIFITPRIMGTAGNSLRY.

The signal sequence occupies residues 1-24 (MNTKLTKIISGLFVATAAFQTASA). Low complexity-rich tracts occupy residues 135–154 (ARPA…AAAP) and 197–233 (ASAK…PAKQ). Disordered stretches follow at residues 135-156 (ARPA…APST) and 197-236 (ASAK…QTNI).

It belongs to the bacterial secretin family. PilQ subfamily. Homododecamer. Tetramer of trimer.

The protein resides in the cell outer membrane. Its function is as follows. Required for type IV pilus biogenesis and competence. Could function as a pore for exit of the pilus but also as a channel for entry of heme and antimicrobial agents and uptake of transforming DNA. The chain is Type IV pilus biogenesis and competence protein PilQ (pilQ) from Neisseria meningitidis serogroup B / serotype 15 (strain H44/76).